The following is a 258-amino-acid chain: Mediator of RNA polymerase II transcription subunit 7 (258 aa).

Disordered regions lie at residues 1 to 39 (MLPG…PPPH) and 202 to 243 (EKET…PPSV). Residues 203–217 (KETEEDEEMKEDDEE) show a composition bias toward acidic residues. Positions 220–229 (STSSSEGNQK) are enriched in polar residues.

It belongs to the Mediator complex subunit 7 family. Component of the Mediator complex.

It localises to the nucleus. Component of the Mediator complex, a coactivator involved in the regulated transcription of nearly all RNA polymerase II-dependent genes. Mediator functions as a bridge to convey information from gene-specific regulatory proteins to the basal RNA polymerase II transcription machinery. Mediator is recruited to promoters by direct interactions with regulatory proteins and serves as a scaffold for the assembly of a functional preinitiation complex with RNA polymerase II and the general transcription factors. This is Mediator of RNA polymerase II transcription subunit 7 (let-49) from Caenorhabditis briggsae.